Here is a 444-residue protein sequence, read N- to C-terminus: uncharacterized protein (444 aa).

One can recognise an HTH gntR-type domain in the interval 1–69 (MEKYMSLLTR…PKSGYYIVKK (69 aa)). The H-T-H motif DNA-binding region spans 29–48 (IRQLSARYQVSKSTVIRALQ). N6-(pyridoxal phosphate)lysine is present on lysine 286.

This sequence in the C-terminal section; belongs to the class-I pyridoxal-phosphate-dependent aminotransferase family. It depends on pyridoxal 5'-phosphate as a cofactor.

This is an uncharacterized protein from Bacillus subtilis (strain 168).